Reading from the N-terminus, the 182-residue chain is Probable RNA 2'-phosphotransferase (182 aa).

Belongs to the KptA/TPT1 family.

In terms of biological role, removes the 2'-phosphate from RNA via an intermediate in which the phosphate is ADP-ribosylated by NAD followed by a presumed transesterification to release the RNA and generate ADP-ribose 1''-2''-cyclic phosphate (APPR&gt;P). May function as an ADP-ribosylase. The polypeptide is Probable RNA 2'-phosphotransferase (Pseudomonas paraeruginosa (strain DSM 24068 / PA7) (Pseudomonas aeruginosa (strain PA7))).